Here is a 295-residue protein sequence, read N- to C-terminus: WHI2-like protein P4H10.16c (295 aa).

This sequence belongs to the WHI2 family.

Its subcellular location is the cytoplasm. The protein resides in the nucleus. In Schizosaccharomyces pombe (strain 972 / ATCC 24843) (Fission yeast), this protein is WHI2-like protein P4H10.16c.